A 264-amino-acid chain; its full sequence is MRILFIGDVVGSPGRDMVKEYVPKLKTKYKPHFTIINGENAAHGKGLTEKIYHSLIQSGADAITMGNHTWDKKEIFDFIDDVPNLVRPANFPEGTPGKGITYVKANGKELAVINLQGRTFLPPLDDPFLKADELIAEAAKRTPYIFIDFHAEATSEKLALGWYTDGRASAVVGTHTHVQTADNRILPKGTAYITDVGMTGPYDGILGMDRETIIKRFKTNLPVRFTVAEGKTTLSGVVIDIDDQTKKAVKIERILINDDHMFFE.

Fe cation is bound by residues Asp8, Glu39, Asn40, and Asn67. Catalysis depends on His68, which acts as the Proton donor. Residues His150, His175, and His177 each coordinate Fe cation.

The protein belongs to the YmdB-like family. Homodimer. Requires Fe(2+) as cofactor. It depends on Fe(3+) as a cofactor.

The protein resides in the cytoplasm. The enzyme catalyses a nucleoside 2',3'-cyclic phosphate + H2O = a nucleoside 3'-phosphate + H(+). Functionally, plays a central, regulatory role in the late adaptive responses and affects the levels of many genes. May act via regulation of cAMP levels. Decreases the expression of motility genes and induces genes involved in biofilm formation, by controlling the expression of SlrR. Required for formation of intercellular nanotubes that bridge neighboring cells to allow molecular exchange. Plays a key role in directing the early stages of colony development. In vitro, has a metal-dependent phosphodiesterase activity against 2',3'-cAMP and 2',3'-cGMP. Also has 3',5'-cyclic-nucleotide phosphodiesterase activity, but cannot use cyclic di-AMP or cyclic di-GMP, and does not have phosphatase activity. The sequence is that of 2',3'-cyclic-nucleotide 2'-phosphodiesterase (ymdB) from Bacillus subtilis (strain 168).